The sequence spans 472 residues: 2-oxoisovalerate dehydrogenase subunit alpha 2, mitochondrial (472 aa).

Thiamine diphosphate is bound at residue 185 to 187 (QYR). The K(+) site is built by serine 234, threonine 239, and glutamine 240.

This sequence belongs to the BCKDHA family. Heterotetramer of alpha and beta chains. Requires thiamine diphosphate as cofactor.

It is found in the mitochondrion matrix. It carries out the reaction N(6)-[(R)-lipoyl]-L-lysyl-[protein] + 3-methyl-2-oxobutanoate + H(+) = N(6)-[(R)-S(8)-2-methylpropanoyldihydrolipoyl]-L-lysyl-[protein] + CO2. Functionally, the branched-chain alpha-keto dehydrogenase complex catalyzes the overall conversion of alpha-keto acids to acyl-CoA and CO(2). It contains multiple copies of three enzymatic components: branched-chain alpha-keto acid decarboxylase (E1), lipoamide acyltransferase (E2) and lipoamide dehydrogenase (E3). In Arabidopsis thaliana (Mouse-ear cress), this protein is 2-oxoisovalerate dehydrogenase subunit alpha 2, mitochondrial.